Consider the following 837-residue polypeptide: Protein translocase subunit SecA 1 (837 aa).

Residues Q85, 103 to 107 (GEGKT), and D492 contribute to the ATP site. Positions 791-837 (KGEAINPAEGKPEAKRQPIRKDQHIGRNDPCPCGSGKKYKNCHGKEA) are disordered. Over residues 800–817 (GKPEAKRQPIRKDQHIGR) the composition is skewed to basic and acidic residues. Residues C821, C823, C832, and H833 each contribute to the Zn(2+) site. The span at 827–837 (KKYKNCHGKEA) shows a compositional bias: basic residues.

This sequence belongs to the SecA family. Monomer and homodimer. Part of the essential Sec protein translocation apparatus which comprises SecA, SecYEG and auxiliary proteins SecDF. Other proteins may also be involved. Requires Zn(2+) as cofactor.

Its subcellular location is the cell membrane. It localises to the cytoplasm. The enzyme catalyses ATP + H2O + cellular proteinSide 1 = ADP + phosphate + cellular proteinSide 2.. Its function is as follows. Part of the Sec protein translocase complex. Interacts with the SecYEG preprotein conducting channel. Has a central role in coupling the hydrolysis of ATP to the transfer of proteins into and across the cell membrane, serving as an ATP-driven molecular motor driving the stepwise translocation of polypeptide chains across the membrane. The sequence is that of Protein translocase subunit SecA 1 from Listeria monocytogenes serovar 1/2a (strain ATCC BAA-679 / EGD-e).